The primary structure comprises 240 residues: MRHYGVALRRDAGLFGYERALNRHGLGPVAGVDEAGRGACAGPLVIAAVILAPEARQRLARLADSKLLTEQIRESVFEDVMAAAAAWSTVVISAAEIDRVGLHVANITGMRRAVARLSARPGYVLTDGFAVAGFGVESLAVVKGDRVVACVAAASVVAKVTRDRIMRALHTRYAEYDFAQHKGYVTAAHAAALARCGPCDEHRMSYVNVAAHAATTREARSLRLEDRVLVTSRHGVTETV.

One can recognise an RNase H type-2 domain in the interval 27–226 (GPVAGVDEAG…REARSLRLED (200 aa)). A divalent metal cation-binding residues include Asp-33, Glu-34, and Asp-127.

This sequence belongs to the RNase HII family. The cofactor is Mn(2+). Mg(2+) is required as a cofactor.

The protein resides in the cytoplasm. The catalysed reaction is Endonucleolytic cleavage to 5'-phosphomonoester.. Endonuclease that specifically degrades the RNA of RNA-DNA hybrids. This Frankia casuarinae (strain DSM 45818 / CECT 9043 / HFP020203 / CcI3) protein is Ribonuclease HII.